The sequence spans 75 residues: KGSSGMMSMVAAAIAANRTKKGASAQAIRKYVAAHSSLKGAVLNFRLRRALAAGLKSGALAHPKGSAGWVLVPKK.

One can recognise an H15 domain in the interval 2-74 (GSSGMMSMVA…GSAGWVLVPK (73 aa)).

The protein belongs to the histone H1/H5 family. In terms of tissue distribution, sperm.

The protein localises to the nucleus. It is found in the chromosome. In terms of biological role, linker histones are implicated in chromatin remodeling and/or transcriptional regulation during spermiogenesis, the process of spermatid maturation into spermatozoa. This chain is Sperm-specific protein PL-I, found in Spisula solidissima (Atlantic surf-clam).